The following is a 255-amino-acid chain: tRNA (guanine-N(7)-)-methyltransferase (255 aa).

The disordered stretch occupies residues 1-31 (MMHDDPNEAGLPPHNDAIPDETAEGADEVNP). Residues 18–27 (IPDETAEGAD) show a composition bias toward acidic residues. The S-adenosyl-L-methionine site is built by E86, E111, D138, and D161. D161 is an active-site residue. Substrate-binding positions include K165, D197, and 232 to 235 (TKFE).

This sequence belongs to the class I-like SAM-binding methyltransferase superfamily. TrmB family.

It carries out the reaction guanosine(46) in tRNA + S-adenosyl-L-methionine = N(7)-methylguanosine(46) in tRNA + S-adenosyl-L-homocysteine. Its pathway is tRNA modification; N(7)-methylguanine-tRNA biosynthesis. Functionally, catalyzes the formation of N(7)-methylguanine at position 46 (m7G46) in tRNA. This Burkholderia cenocepacia (strain HI2424) protein is tRNA (guanine-N(7)-)-methyltransferase.